Here is a 409-residue protein sequence, read N- to C-terminus: Serine hydroxymethyltransferase (409 aa).

(6S)-5,6,7,8-tetrahydrofolate contacts are provided by residues leucine 116 and glycine 120 to leucine 122. Lysine 225 is subject to N6-(pyridoxal phosphate)lysine.

The protein belongs to the SHMT family. As to quaternary structure, homodimer. The cofactor is pyridoxal 5'-phosphate.

Its subcellular location is the cytoplasm. The catalysed reaction is (6R)-5,10-methylene-5,6,7,8-tetrahydrofolate + glycine + H2O = (6S)-5,6,7,8-tetrahydrofolate + L-serine. It functions in the pathway one-carbon metabolism; tetrahydrofolate interconversion. The protein operates within amino-acid biosynthesis; glycine biosynthesis; glycine from L-serine: step 1/1. Its function is as follows. Catalyzes the reversible interconversion of serine and glycine with tetrahydrofolate (THF) serving as the one-carbon carrier. This reaction serves as the major source of one-carbon groups required for the biosynthesis of purines, thymidylate, methionine, and other important biomolecules. Also exhibits THF-independent aldolase activity toward beta-hydroxyamino acids, producing glycine and aldehydes, via a retro-aldol mechanism. The chain is Serine hydroxymethyltransferase from Acholeplasma laidlawii (strain PG-8A).